A 1195-amino-acid polypeptide reads, in one-letter code: Probable beta-tubulin polyglutamylase (1195 aa).

The disordered stretch occupies residues 1 to 110; it reads MSQKDIYNKY…QTEMTDNQNE (110 aa). 2 stretches are compositionally biased toward acidic residues: residues 17 to 27 and 44 to 79; these read DQQEEDDDENQ and QGED…EENN. Coiled coils occupy residues 59-103 and 144-260; these read DEEQ…QQTE and QDMD…QSEQ. Low complexity predominate over residues 80 to 89; sequence QDQQNNSESN. Positions 90-110 are enriched in polar residues; sequence LQYDKTNQKNQQTEMTDNQNE. Residues 281–343 are disordered; the sequence is PKNDVDQYTG…NKKEQAKKQQ (63 aa). Residues 294–316 are compositionally biased toward acidic residues; the sequence is DSGESDEEANNEDDDEDEDDESE. Over residues 322 to 334 the composition is skewed to basic residues; the sequence is RKNKAQLLKKKNN. A TTL domain is found at 350 to 703; it reads KQTLVLNVAD…TCKAKNEIIN (354 aa). Residues 500-503, Lys-513, and Asp-515 contribute to the ATP site; that span reads QRYL. The c-MTBD region stretch occupies residues 674–756; sequence PLDSYIKKNT…GFERIFPMED (83 aa). Residues 783-862 are disordered; sequence RNTKKVTEDP…ETIQCEDQEQ (80 aa). A compositionally biased stretch (polar residues) spans 825–849; the sequence is PNSQTTINKGIPGQNGQRPSSSQLN. Residues 850–860 show a composition bias toward acidic residues; the sequence is EEGETIQCEDQ.

It localises to the cytoplasm. Its subcellular location is the cytoskeleton. It is found in the cell projection. The protein localises to the cilium. The protein resides in the cilium basal body. Its function is as follows. Probable tubulin polyglutamylase with a strong preference for beta-tubulin. The chain is Probable beta-tubulin polyglutamylase (Ttll6a) from Tetrahymena thermophila (strain SB210).